A 446-amino-acid polypeptide reads, in one-letter code: Sensor protein PfeS (446 aa).

Residues 1 to 9 (MRRHPLLWK) are Cytoplasmic-facing. Residues 10-30 (LALLQVGFCLLLTWLIYTWGL) traverse the membrane as a helical segment. Over 31–155 (SVERSTYFLA…LLPGGLTPWT (125 aa)) the chain is Periplasmic. A helical transmembrane segment spans residues 156 to 176 (HLVTHGIVPTLLAALLGLLLY). Positions 177 to 233 (RHLVVPLNRLRDRADALRADELESTPLAAPLAARRDELGELAQALEHMAERLRLSLA) constitute an HAMP domain. Residues 177-446 (RHLVVPLNRL…CLHLWLPAAA (270 aa)) lie on the Cytoplasmic side of the membrane. The Histidine kinase domain occupies 241 to 446 (TLSHELRTPL…CLHLWLPAAA (206 aa)). Histidine 244 is modified (phosphohistidine; by autocatalysis).

Its subcellular location is the cell inner membrane. It carries out the reaction ATP + protein L-histidine = ADP + protein N-phospho-L-histidine.. Its function is as follows. Member of the two-component regulatory system PfeR/PfeS. May activate PfeR by phosphorylation. This chain is Sensor protein PfeS (pfeS), found in Pseudomonas aeruginosa (strain ATCC 15692 / DSM 22644 / CIP 104116 / JCM 14847 / LMG 12228 / 1C / PRS 101 / PAO1).